The primary structure comprises 414 residues: Putative competence-damage inducible protein (414 aa).

It belongs to the CinA family.

This Limosilactobacillus fermentum (strain NBRC 3956 / LMG 18251) (Lactobacillus fermentum) protein is Putative competence-damage inducible protein.